A 201-amino-acid chain; its full sequence is Peptide deformylase (201 aa).

Fe cation is bound by residues cysteine 121 and histidine 163. Glutamate 164 is a catalytic residue. Histidine 167 is a binding site for Fe cation.

Belongs to the polypeptide deformylase family. The cofactor is Fe(2+).

It catalyses the reaction N-terminal N-formyl-L-methionyl-[peptide] + H2O = N-terminal L-methionyl-[peptide] + formate. Its function is as follows. Removes the formyl group from the N-terminal Met of newly synthesized proteins. Requires at least a dipeptide for an efficient rate of reaction. N-terminal L-methionine is a prerequisite for activity but the enzyme has broad specificity at other positions. This chain is Peptide deformylase, found in Synechococcus sp. (strain CC9605).